The following is a 435-amino-acid chain: Trigger factor (435 aa).

One can recognise a PPIase FKBP-type domain in the interval 161–246; the sequence is GDKLTLDFTG…IHKTEGPILP (86 aa).

Belongs to the FKBP-type PPIase family. Tig subfamily.

It is found in the cytoplasm. It catalyses the reaction [protein]-peptidylproline (omega=180) = [protein]-peptidylproline (omega=0). Involved in protein export. Acts as a chaperone by maintaining the newly synthesized protein in an open conformation. Functions as a peptidyl-prolyl cis-trans isomerase. The protein is Trigger factor of Colwellia psychrerythraea (strain 34H / ATCC BAA-681) (Vibrio psychroerythus).